Reading from the N-terminus, the 199-residue chain is MSSGNAKIGHRAPQFKATAVMPDGQFKDISLADYKGKYVVFFFYPLDFTFVCPTEIIAFSDRAEEFKKLNCQVIGASVDSHFCHLAWINTPKKQGGLGPMNIPLISDPKRTIAQDYGVLKADEGISFRGLFIIDDKGILRQITINDLPVGRSVDETLRLVQAFQFTDKHGEVCPAGWKPGSDTIKPDVQKSKEYFSKQK.

Position 2 is an N-acetylserine (Ser2). One can recognise a Thioredoxin domain in the interval 6 to 165 (AKIGHRAPQF…TLRLVQAFQF (160 aa)). Residue Lys7 is modified to N6-acetyllysine; alternate. A Glycyl lysine isopeptide (Lys-Gly) (interchain with G-Cter in SUMO2); alternate cross-link involves residue Lys7. N6-acetyllysine is present on residues Lys16 and Lys27. At Lys35 the chain carries N6-acetyllysine; alternate. The residue at position 35 (Lys35) is an N6-succinyllysine; alternate. Cys52 serves as the catalytic Cysteine sulfenic acid (-SOH) intermediate. Thr90 carries the post-translational modification Phosphothreonine. Lys120 is covalently cross-linked (Glycyl lysine isopeptide (Lys-Gly) (interchain with G-Cter in SUMO2)). Position 136 is an N6-acetyllysine (Lys136). A disordered region spans residues 176–199 (GWKPGSDTIKPDVQKSKEYFSKQK). Residues 184–199 (IKPDVQKSKEYFSKQK) show a composition bias toward basic and acidic residues. Lys185 participates in a covalent cross-link: Glycyl lysine isopeptide (Lys-Gly) (interchain with G-Cter in SUMO1). Lys197 carries the post-translational modification N6-acetyllysine.

Belongs to the peroxiredoxin family. AhpC/Prx1 subfamily. Homodimer; disulfide-linked, upon oxidation. 5 homodimers assemble to form a ring-like decamer. Interacts with GDPD5; forms a mixed-disulfide with GDPD5. Interacts with SESN1 and SESN2. Interacts with FAM107A. In terms of processing, phosphorylated on Thr-90 during the M-phase, which leads to a decrease in enzymatic activity. Acetylation increases reducing activity and resistance to superoxidation. Deacetylated by HDAC6 which decreases reducing activity.

The protein resides in the cytoplasm. The enzyme catalyses a hydroperoxide + [thioredoxin]-dithiol = an alcohol + [thioredoxin]-disulfide + H2O. Its function is as follows. Thiol-specific peroxidase that catalyzes the reduction of hydrogen peroxide and organic hydroperoxides to water and alcohols, respectively. Plays a role in cell protection against oxidative stress by detoxifying peroxides and as sensor of hydrogen peroxide-mediated signaling events. Might participate in the signaling cascades of growth factors and tumor necrosis factor-alpha by regulating the intracellular concentrations of H(2)O(2). Reduces an intramolecular disulfide bond in GDPD5 that gates the ability to GDPD5 to drive postmitotic motor neuron differentiation. The chain is Peroxiredoxin-1 (PRDX1) from Bos taurus (Bovine).